The chain runs to 134 residues: SNAPIN protein homolog (134 aa).

Residues 50–124 are a coiled coil; sequence QLQAELRGQL…EKEQRRRQAL (75 aa).

This sequence belongs to the SNAPIN family. In terms of assembly, component of the biogenesis of lysosome-related organelles complex-1 (BLOC-1) composed of Blos1, Blos2, Blos3, Blos4, Dysb, Muted, Pldn and Snapin. Interacts with Blos2 and Dysb.

It localises to the membrane. Its subcellular location is the cytoplasm. The protein localises to the cytosol. Its function is as follows. Component of the biogenesis of lysosome-related organelles complex-1 (BLOC-1) involved in pigment granule biogenesis. May participate in the coupling of lysosomes to microtubule plus-end-directed kinesin motor. This Drosophila melanogaster (Fruit fly) protein is SNAPIN protein homolog.